We begin with the raw amino-acid sequence, 221 residues long: Probable nicotinate-nucleotide adenylyltransferase (221 aa).

It belongs to the NadD family.

It carries out the reaction nicotinate beta-D-ribonucleotide + ATP + H(+) = deamido-NAD(+) + diphosphate. It functions in the pathway cofactor biosynthesis; NAD(+) biosynthesis; deamido-NAD(+) from nicotinate D-ribonucleotide: step 1/1. Its function is as follows. Catalyzes the reversible adenylation of nicotinate mononucleotide (NaMN) to nicotinic acid adenine dinucleotide (NaAD). This is Probable nicotinate-nucleotide adenylyltransferase from Marinomonas sp. (strain MWYL1).